The primary structure comprises 317 residues: tRNA(Met) cytidine acetate ligase (317 aa).

ATP-binding positions include 6–19, Gly100, Asn157, and Arg182; that span reads IAEY…HIYQ.

It belongs to the TmcAL family.

Its subcellular location is the cytoplasm. It catalyses the reaction cytidine(34) in elongator tRNA(Met) + acetate + ATP = N(4)-acetylcytidine(34) in elongator tRNA(Met) + AMP + diphosphate. Its function is as follows. Catalyzes the formation of N(4)-acetylcytidine (ac(4)C) at the wobble position of elongator tRNA(Met), using acetate and ATP as substrates. First activates an acetate ion to form acetyladenylate (Ac-AMP) and then transfers the acetyl group to tRNA to form ac(4)C34. The sequence is that of tRNA(Met) cytidine acetate ligase from Mesomycoplasma hyopneumoniae (strain 232) (Mycoplasma hyopneumoniae).